The chain runs to 365 residues: Aminomethyltransferase (365 aa).

The protein belongs to the GcvT family. The glycine cleavage system is composed of four proteins: P, T, L and H.

The enzyme catalyses N(6)-[(R)-S(8)-aminomethyldihydrolipoyl]-L-lysyl-[protein] + (6S)-5,6,7,8-tetrahydrofolate = N(6)-[(R)-dihydrolipoyl]-L-lysyl-[protein] + (6R)-5,10-methylene-5,6,7,8-tetrahydrofolate + NH4(+). In terms of biological role, the glycine cleavage system catalyzes the degradation of glycine. This chain is Aminomethyltransferase, found in Chlorobaculum tepidum (strain ATCC 49652 / DSM 12025 / NBRC 103806 / TLS) (Chlorobium tepidum).